A 490-amino-acid chain; its full sequence is Glutamate--tRNA ligase 2 (490 aa).

Positions 33–43 match the 'HIGH' region motif; that stretch reads PSPTGYLHIGG. Positions 262 to 266 match the 'KMSKS' region motif; sequence KLSKR. Residue Lys265 participates in ATP binding.

It belongs to the class-I aminoacyl-tRNA synthetase family. Glutamate--tRNA ligase type 1 subfamily. Monomer.

Its subcellular location is the cytoplasm. It carries out the reaction tRNA(Glu) + L-glutamate + ATP = L-glutamyl-tRNA(Glu) + AMP + diphosphate. Its function is as follows. Catalyzes the attachment of glutamate to tRNA(Glu) in a two-step reaction: glutamate is first activated by ATP to form Glu-AMP and then transferred to the acceptor end of tRNA(Glu). The polypeptide is Glutamate--tRNA ligase 2 (Parvibaculum lavamentivorans (strain DS-1 / DSM 13023 / NCIMB 13966)).